We begin with the raw amino-acid sequence, 578 residues long: MSILNEPQGASAAEDSYENELPVRRKQPGNVVIKWLTTTDHKTIGTMYLVTSFAFFVIGGVMALFMRAELARPGLQIMSNEQFNQAFTMHGTIMLLMFATPLFAGFANWIMPLQIGAPDVAFPRLNMFAYWLYLFGSTIAVGGFLTPQGAADFGWFAYSPLSDAVHSPGIGGDLWIMGLAFSGFGTILGSVNFITTIICMRAPGMTMFRMPIFTWNVLLTGVLVLLAFPVLAAALFALEADRKFGAHIFDSSNGGALLWQHLFWFFGHPEVYIIALPFFGIVSEIIPVFSRKPIFGYMGLIGATIAIAGLSVTVWAHHMYVTGGVLLPFFSFMTFLIAVPTGVKFFNWIGTMWKGSLSFETPMLWSTGFLITFLFGGLTGVILASPPLDFHVSDSYFVVAHFHYVVFGTVVFAMFAGFHFWWPKFTGKMLDERLGKITFWTLFVGFHGTFLVQHWLGAEGMPRRYADYLAADGFTALNTISTISSFLLGMSILPFFYNIWKTAKYGKKIEVDDPWGYGRSLEWATSCPPPRHNFLTLPRIRSESPAFDLHHPEISAIDQLENVGHGEKALAGGKEAGK.

A disordered region spans residues 1–21 (MSILNEPQGASAAEDSYENEL). Residues 44 to 64 (IGTMYLVTSFAFFVIGGVMAL) traverse the membrane as a helical segment. Position 90 (His-90) interacts with Fe(II)-heme a. 6 helical membrane-spanning segments follow: residues 93 to 113 (IMLL…IMPL), 125 to 145 (LNMF…GGFL), 174 to 194 (LWIM…VNFI), 217 to 237 (VLLT…ALFA), 262 to 282 (LFWF…FGIV), and 294 to 314 (IFGY…SVTV). Residues His-268 and Tyr-272 each contribute to the Cu cation site. A cross-link (1'-histidyl-3'-tyrosine (His-Tyr)) is located at residues 268-272 (HPEVY). 2 residues coordinate Cu cation: His-317 and His-318. 2 consecutive transmembrane segments (helical) span residues 319-339 (MYVT…LIAV) and 363-383 (MLWS…GVIL). His-401 contributes to the heme a3 binding site. 3 consecutive transmembrane segments (helical) span residues 402-422 (FHYV…HFWW), 437-457 (ITFW…HWLG), and 480-500 (ISTI…YNIW). Residue His-403 participates in Fe(II)-heme a binding.

This sequence belongs to the heme-copper respiratory oxidase family. In terms of assembly, associates with subunits II, III and IV to form cytochrome c oxidase. Cu(2+) serves as cofactor. The cofactor is heme.

Its subcellular location is the cell membrane. It catalyses the reaction 4 Fe(II)-[cytochrome c] + O2 + 8 H(+)(in) = 4 Fe(III)-[cytochrome c] + 2 H2O + 4 H(+)(out). It functions in the pathway energy metabolism; oxidative phosphorylation. Cytochrome c oxidase is the component of the respiratory chain that catalyzes the reduction of oxygen to water. Subunits 1-3 form the functional core of the enzyme complex. CO I is the catalytic subunit of the enzyme. Electrons originating in cytochrome c are transferred via the copper A center of subunit 2 and heme A of subunit 1 to the bimetallic center formed by heme A3 and copper B. The chain is Probable cytochrome c oxidase subunit 1-alpha (ctaD1) from Streptomyces coelicolor (strain ATCC BAA-471 / A3(2) / M145).